The sequence spans 337 residues: Glutaredoxin-3 (337 aa).

N-acetylalanine is present on Ala2. The 118-residue stretch at 2–119 (AAGAAEAGEA…LTKKVQRHVS (118 aa)) folds into the Thioredoxin domain. Ser119 carries the phosphoserine modification. 2 consecutive Glutaredoxin domains span residues 144–238 (HAAP…PKLE) and 239–337 (ERLK…KGEN). [2Fe-2S] cluster is bound by residues Cys161 and Cys263.

Homodimer; the homodimer is independent of 2Fe-2S clusters. Heterotrimer; forms a heterotrimeric complex composed by two BOLA2 molecules and one GLRX3 molecule; linked by [2Fe-2S] clusters. Interacts (via N-terminus) with PRKCQ/PKC-theta. Interacts (via C-terminus) with CSRP3. Interacts with CSRP2.

It is found in the cytoplasm. The protein localises to the cytosol. Its subcellular location is the cell cortex. The protein resides in the myofibril. It localises to the sarcomere. It is found in the z line. In terms of biological role, together with BOLA2, acts as a cytosolic iron-sulfur (Fe-S) cluster assembly factor that facilitates [2Fe-2S] cluster insertion into a subset of cytosolic proteins. Acts as a critical negative regulator of cardiac hypertrophy and a positive inotropic regulator. Required for hemoglobin maturation. Does not possess any thyoredoxin activity since it lacks the conserved motif that is essential for catalytic activity. The chain is Glutaredoxin-3 (Glrx3) from Mus musculus (Mouse).